We begin with the raw amino-acid sequence, 207 residues long: Histidine biosynthesis bifunctional protein HisIE (207 aa).

The interval 1–117 (MSLVTTINWE…GKQEQPALVF (117 aa)) is phosphoribosyl-AMP cyclohydrolase. Residues 118-207 (LHQLEQVLAN…TEKLQERHNK (90 aa)) form a phosphoribosyl-ATP pyrophosphohydrolase region.

This sequence in the N-terminal section; belongs to the PRA-CH family. The protein in the C-terminal section; belongs to the PRA-PH family.

It is found in the cytoplasm. It carries out the reaction 1-(5-phospho-beta-D-ribosyl)-ATP + H2O = 1-(5-phospho-beta-D-ribosyl)-5'-AMP + diphosphate + H(+). It catalyses the reaction 1-(5-phospho-beta-D-ribosyl)-5'-AMP + H2O = 1-(5-phospho-beta-D-ribosyl)-5-[(5-phospho-beta-D-ribosylamino)methylideneamino]imidazole-4-carboxamide. Its pathway is amino-acid biosynthesis; L-histidine biosynthesis; L-histidine from 5-phospho-alpha-D-ribose 1-diphosphate: step 2/9. It participates in amino-acid biosynthesis; L-histidine biosynthesis; L-histidine from 5-phospho-alpha-D-ribose 1-diphosphate: step 3/9. The sequence is that of Histidine biosynthesis bifunctional protein HisIE from Photobacterium profundum (strain SS9).